The sequence spans 121 residues: Type II secretion system protein I (121 aa).

Residues 1-6 (MRRQKG) constitute a propeptide, leader sequence. An N-methylmethionine modification is found at M7. A helical membrane pass occupies residues 7–27 (MTLVEVLVALSVFALAGIAVL).

The protein belongs to the GSP I family. In terms of assembly, type II secretion is composed of four main components: the outer membrane complex, the inner membrane complex, the cytoplasmic secretion ATPase and the periplasm-spanning pseudopilus. Interacts with core component OutG. In terms of processing, cleaved by prepilin peptidase. Post-translationally, methylated by prepilin peptidase at the amino group of the N-terminal methionine once the leader sequence is cleaved by prepilin peptidase.

The protein localises to the cell inner membrane. In terms of biological role, component of the type II secretion system required for the energy-dependent secretion of extracellular factors such as proteases and toxins from the periplasm. Part of the pseudopilus tip complex that is critical for the recognition and binding of secretion substrates. In Pectobacterium carotovorum subsp. carotovorum (Erwinia carotovora subsp. carotovora), this protein is Type II secretion system protein I (outI).